The following is a 375-amino-acid chain: uncharacterized protein (375 aa).

Topologically, residues 1–2 (MR) are cytoplasmic. A helical; Signal-anchor for type II membrane protein membrane pass occupies residues 3–23 (WYSYVIPAVILSIIAISGVWW). The Lumenal portion of the chain corresponds to 24 to 375 (NATLGTRLDQ…YIEQRLFPQP (352 aa)).

This sequence belongs to the glycosyltransferase 34 family.

It localises to the endoplasmic reticulum membrane. The protein resides in the golgi apparatus membrane. This is an uncharacterized protein from Schizosaccharomyces pombe (strain 972 / ATCC 24843) (Fission yeast).